We begin with the raw amino-acid sequence, 971 residues long: MTDVFKVLTPAKNINGEHTHVSMGDTKGTWYLSLNKSQEFYNVYGLALKNGQKLSLAEKPGEYVPLLVDIDLKKEVNGYPNYGSNDFYNDEDIINVVKIFQNAVSENVNRHAKKLTNKNLRCVVLEKDIFIERINESEDKYIVKKGIHLHFPHLFLPKKDIKNSFMPVVKTMIDQENVFQDFINSMDNQIMPSSLIDDISSKYWLMYGSSKEGLNKPYKISKILDHNQQEISISKCFKSETCIDGSPITDTNVEFELPMLLSINPKPSIISNKLFYFKEAPVKLCDALLPVVNNNREKEGRMSSREIEKMKKLTSFLSVSRADDYNQWWTVGITLFNIGTGRDCEEEALEAWKMFSSQSTKYDESRCDLEWAEMKKKNRPLNARTMGSLIFMAKSDNPVALEKYLLAEQMNIENWTSHQNLDVESIKKLKVPVFDTEIAEMFVSQHEDEYLNGNLGWFKFNGTIWSSLESVGRHMRPSLVSLSRSYLNLIPALKYITKTLQNDDEGYEPSDSGFGFDDDDSASTSGGKTTAEITKLVNSKIKLINDLAKKCQNNGPQMSLMKVIEDMIGIDNLNDKMDQNKQLIAFTNGVYDLSLFTFRQGLPEDYITRQMTIPYDITLTMENPKVIKMLNFFKKIFPDEELFEYFMLENCEMYIGGNRDKILQIWTGEGDNGKSVTNKIIENKFGKLSVKFPKGMVTGDPPKAGACFPELTRAQRGVRWAVVDEFAPDETVNAGVIKNLTGGIDNLYARDIQQKGKDVIDIDPFFKLIFICNTIPNIRNPDNATWNRIRVIPFESTFKDSIDDISLEEQKRDKIFLKDTSFCEKETIRELGEAFAWYLIQVFIKKEQARRDARLNGKSFKIKIPAKVNEATELYKAQGNAIADYFNDKFEISDDDNDTINIKLYYQDFLLWFSQTHSNKNVNIDKKKFMKLFVQHAKGDMNTFICTKLKLKETLEEFNLENNEENGMPLF.

Residues 506 to 528 (GYEPSDSGFGFDDDDSASTSGGK) form a disordered region. Residues 624–807 (PKVIKMLNFF…FKDSIDDISL (184 aa)) form the SF3 helicase domain. 668–675 (GEGDNGKS) provides a ligand contact to ATP.

This sequence belongs to the IIV-6 184R family.

The chain is Putative helicase 184R from Acheta domesticus (House cricket).